We begin with the raw amino-acid sequence, 200 residues long: MTSDFIYPEAQSIAGVDEVGRGPLAGPVVTAAVILDPKNPIIGLADSKTLSKKKRMALYEEITHKALAWSLGRAESKEIDEINIFHATLLAMQRAVNALGIKTDHVLIDGHICPILSIPSSSIVKGDSKVPEISAASILAKVTRDREMEALDKVFPGYGFAQHKGYPTAFHLEKLALLGPTEQHRRSFRPVRRALISLTG.

Residues 11–200 (QSIAGVDEVG…VRRALISLTG (190 aa)) enclose the RNase H type-2 domain. Positions 17, 18, and 109 each coordinate a divalent metal cation.

The protein belongs to the RNase HII family. Requires Mn(2+) as cofactor. The cofactor is Mg(2+).

It is found in the cytoplasm. The catalysed reaction is Endonucleolytic cleavage to 5'-phosphomonoester.. In terms of biological role, endonuclease that specifically degrades the RNA of RNA-DNA hybrids. In Hamiltonella defensa subsp. Acyrthosiphon pisum (strain 5AT), this protein is Ribonuclease HII.